Consider the following 487-residue polypeptide: MTITFQDFQLSSDLTKAIKRMGFEEATPIQAQTIPLGLANKDVIGQAQTGTGKTAAFGIPLVEKINPESPNIQAIVIAPTRELAIQVSEELYKIGQDKRARVLPIYGGQDIGRQIRALKKNPHIIVGTPGRLLDHINRRTMRLQTVNTVVLDEADEMLNMGFIEDIESILSNVPAEHQTLLFSATMPAPIKRIAERFMTNPEHVKVKAKEMTVSNIQQFYLEVHERKKFDTLTRLLDIQSPELAIVFGRTKRRVDELTEALNLRGYTAEGIHGDLTQAKRMVALRKFKQGAIEVLVATDVAARGLDISGVTHVYNFDVPQDPESYVHRIGRTGRAGKTGMAMTFITPREKDMLRAIEQTTKRKMDRMKAPTLDEAIEGQQQVTVDRIRTIIEENNLNFYMTAAAELLEDHDSVTVVAAAIKMMTKEPDNTPVRLTEEAPLRTKRNKNHHHRSSKRRDGGGYRGKNNRSSYDKKRSSNDRRQKKSYNS.

Positions 3–31 (ITFQDFQLSSDLTKAIKRMGFEEATPIQA) match the Q motif motif. The Helicase ATP-binding domain maps to 34–204 (IPLGLANKDV…ERFMTNPEHV (171 aa)). 47–54 (AQTGTGKT) contributes to the ATP binding site. The DEAD box signature appears at 152-155 (DEAD). The 161-residue stretch at 215–375 (NIQQFYLEVH…RMKAPTLDEA (161 aa)) folds into the Helicase C-terminal domain. The segment covering 428–440 (DNTPVRLTEEAPL) has biased composition (basic and acidic residues). A disordered region spans residues 428-487 (DNTPVRLTEEAPLRTKRNKNHHHRSSKRRDGGGYRGKNNRSSYDKKRSSNDRRQKKSYNS). Positions 441–454 (RTKRNKNHHHRSSK) are enriched in basic residues. Over residues 469-479 (SYDKKRSSNDR) the composition is skewed to basic and acidic residues.

It belongs to the DEAD box helicase family. CshA subfamily. In terms of assembly, oligomerizes, may be a member of the RNA degradosome.

The protein resides in the cytoplasm. It carries out the reaction ATP + H2O = ADP + phosphate + H(+). In terms of biological role, DEAD-box RNA helicase possibly involved in RNA degradation. Unwinds dsRNA in both 5'- and 3'-directions, has RNA-dependent ATPase activity. In Bacillus licheniformis (strain ATCC 14580 / DSM 13 / JCM 2505 / CCUG 7422 / NBRC 12200 / NCIMB 9375 / NCTC 10341 / NRRL NRS-1264 / Gibson 46), this protein is DEAD-box ATP-dependent RNA helicase CshA.